We begin with the raw amino-acid sequence, 538 residues long: Phosphoenolpyruvate carboxykinase (ATP) (538 aa).

Positions 64, 205, and 211 each coordinate substrate. ATP-binding positions include Lys-211, His-230, and 246 to 254 (GLSGTGKTT). 2 residues coordinate Mn(2+): Lys-211 and His-230. Position 267 (Asp-267) interacts with Mn(2+). ATP is bound by residues Glu-295, Arg-331, 447–448 (RI), and Thr-453. Arg-331 provides a ligand contact to substrate.

Belongs to the phosphoenolpyruvate carboxykinase (ATP) family. In terms of assembly, monomer. Requires Mn(2+) as cofactor.

The protein resides in the cytoplasm. The enzyme catalyses oxaloacetate + ATP = phosphoenolpyruvate + ADP + CO2. Its pathway is carbohydrate biosynthesis; gluconeogenesis. Functionally, involved in the gluconeogenesis. Catalyzes the conversion of oxaloacetate (OAA) to phosphoenolpyruvate (PEP) through direct phosphoryl transfer between the nucleoside triphosphate and OAA. The chain is Phosphoenolpyruvate carboxykinase (ATP) from Pasteurella multocida (strain Pm70).